Here is a 581-residue protein sequence, read N- to C-terminus: Aspartate--tRNA ligase (581 aa).

E170 provides a ligand contact to L-aspartate. An aspartate region spans residues 194-197; it reads QLFK. R216 lines the L-aspartate pocket. ATP-binding positions include 216-218 and Q225; that span reads RDE. H440 contributes to the L-aspartate binding site. Residue E469 participates in ATP binding. R476 provides a ligand contact to L-aspartate. 521–524 lines the ATP pocket; it reads GFDR.

The protein belongs to the class-II aminoacyl-tRNA synthetase family. Type 1 subfamily. As to quaternary structure, homodimer.

The protein resides in the cytoplasm. The enzyme catalyses tRNA(Asp) + L-aspartate + ATP = L-aspartyl-tRNA(Asp) + AMP + diphosphate. Its function is as follows. Catalyzes the attachment of L-aspartate to tRNA(Asp) in a two-step reaction: L-aspartate is first activated by ATP to form Asp-AMP and then transferred to the acceptor end of tRNA(Asp). The protein is Aspartate--tRNA ligase of Thermosipho africanus (strain TCF52B).